We begin with the raw amino-acid sequence, 311 residues long: Malate dehydrogenase (311 aa).

10–15 (GAGHTG) provides a ligand contact to NAD(+). Positions 85 and 91 each coordinate substrate. Residues asparagine 98 and 121–123 (LTN) contribute to the NAD(+) site. Residues asparagine 123 and arginine 154 each coordinate substrate. The active-site Proton acceptor is histidine 178.

This sequence belongs to the LDH/MDH superfamily. MDH type 3 family.

It carries out the reaction (S)-malate + NAD(+) = oxaloacetate + NADH + H(+). Catalyzes the reversible oxidation of malate to oxaloacetate. This is Malate dehydrogenase from Staphylococcus carnosus (strain TM300).